The chain runs to 583 residues: Extracellular serine/threonine protein kinase four-jointed (583 aa).

Residues 1 to 78 (MYDIKRLEAG…RRRSLQRRAC (78 aa)) lie on the Cytoplasmic side of the membrane. A helical; Signal-anchor for type II membrane protein membrane pass occupies residues 79-99 (LLSILAAFVFGMALGVVVPMF). At 100-583 (GLPRHQDSPP…LGQVQKCQGS (484 aa)) the chain is on the extracellular side. Residues 179–222 (RTASGRYRKGPERRLSKKMPERVQPQETSRSPTTSPTNPTSEHQ) are disordered. The span at 187-199 (KGPERRLSKKMPE) shows a compositional bias: basic and acidic residues. The segment covering 206–219 (TSRSPTTSPTNPTS) has biased composition (low complexity). N-linked (GlcNAc...) asparagine glycans are attached at residues N310 and N379. The segment at 384 to 421 (MQSERQAQSQPHGLLKRLGAASSPGSAHQSNAIEETGT) is disordered. N-linked (GlcNAc...) asparagine glycosylation is present at N491.

Belongs to the FJX1/FJ family. Proteolytically cleaved to yield a secreted protein. As to expression, in the eye disk, expressed in a gradient ahead of the morphogenetic furrow, high at the equator and low at the poles of the eye. In the leg disk, expressed in concentric rings, possibly corresponding to segmental boundaries. In the wing disk, expression is localized in the wing pouch; low in peripheral regions and high towards the center.

It is found in the golgi apparatus membrane. It localises to the secreted. The catalysed reaction is L-seryl-[protein] + ATP = O-phospho-L-seryl-[protein] + ADP + H(+). The enzyme catalyses L-threonyl-[protein] + ATP = O-phospho-L-threonyl-[protein] + ADP + H(+). In terms of biological role, golgi serine/threonine protein kinase required for intermediate growth in the proximal-distal axis. Phosphorylates specific residues within extracellular cadherin domains of Fat (ft) and Dachsous (ds) as they transit through the Golgi. Acts in ommatidial polarity determination as a secondary signal downstream of Notch, JAK/STAT and wingless. Also necessary for the initiation, up-regulation or maintenance of Notch ligand, Serrate (Ser) expression in legs, thereby participating in a feedback loop with N signaling. Sufficient for joint formation and growth in the leg. This is Extracellular serine/threonine protein kinase four-jointed from Drosophila melanogaster (Fruit fly).